Reading from the N-terminus, the 451-residue chain is UPF0210 protein NMA1908 (451 aa).

This sequence belongs to the UPF0210 family. Homodimer.

The sequence is that of UPF0210 protein NMA1908 from Neisseria meningitidis serogroup A / serotype 4A (strain DSM 15465 / Z2491).